A 388-amino-acid polypeptide reads, in one-letter code: Purple acid phosphatase 19 (388 aa).

The first 24 residues, 1 to 24 (MGLNHLTLVCSAIALLSIFVVSQA), serve as a signal peptide directing secretion. Residues Asn97 and Asn111 are each glycosylated (N-linked (GlcNAc...) asparagine). Fe cation contacts are provided by Asp145 and Tyr148. Asp145 lines the Zn(2+) pocket. Asn182 is a binding site for Zn(2+). Residue Asn182 participates in substrate binding. Residue Asn226 is glycosylated (N-linked (GlcNAc...) asparagine). His238 is a binding site for Zn(2+). His248 serves as the catalytic Proton donor. His275 is a binding site for Zn(2+). 275–277 (HVH) serves as a coordination point for substrate. His277 is a binding site for Fe cation. N-linked (GlcNAc...) asparagine glycans are attached at residues Asn291 and Asn348.

Belongs to the metallophosphoesterase superfamily. Purple acid phosphatase family. In terms of assembly, homodimer. It depends on Fe cation as a cofactor. Requires Zn(2+) as cofactor. In terms of tissue distribution, specifically expressed in flowers.

The protein resides in the secreted. The enzyme catalyses a phosphate monoester + H2O = an alcohol + phosphate. The polypeptide is Purple acid phosphatase 19 (PAP19) (Arabidopsis thaliana (Mouse-ear cress)).